The sequence spans 407 residues: Peptidase T (407 aa).

Residue H77 participates in Zn(2+) binding. D79 is an active-site residue. Residue D140 participates in Zn(2+) binding. Residue E174 is the Proton acceptor of the active site. Zn(2+) is bound by residues E175, D197, and H379.

Belongs to the peptidase M20B family. The cofactor is Zn(2+).

It is found in the cytoplasm. The enzyme catalyses Release of the N-terminal residue from a tripeptide.. Its function is as follows. Cleaves the N-terminal amino acid of tripeptides. The sequence is that of Peptidase T from Bacteroides fragilis (strain YCH46).